The chain runs to 84 residues: Putative defensin-like protein 38 (84 aa).

A signal peptide spans 1-26; that stretch reads MASSKNGTVLFVSLMILLLISTGVKA. 4 disulfide bridges follow: C28–C84, C41–C65, C50–C76, and C54–C78.

Belongs to the DEFL family.

It localises to the secreted. This is Putative defensin-like protein 38 from Arabidopsis thaliana (Mouse-ear cress).